The chain runs to 281 residues: Probable replication-associated protein repA1 (281 aa).

Belongs to the IncFII RepA family.

Functionally, this protein is essential for plasmid replication; it is involved in copy control functions. The protein is Probable replication-associated protein repA1 (repA1) of Buchnera aphidicola subsp. Cinara cedri (strain Cc).